The chain runs to 473 residues: Glutamate--tRNA ligase (473 aa).

Positions 13-23 match the 'HIGH' region motif; that stretch reads PSPTGFLHVGG. Positions 240-244 match the 'KMSKS' region motif; sequence KLSKR. An ATP-binding site is contributed by Lys243.

The protein belongs to the class-I aminoacyl-tRNA synthetase family. Glutamate--tRNA ligase type 1 subfamily. In terms of assembly, monomer.

Its subcellular location is the cytoplasm. The catalysed reaction is tRNA(Glu) + L-glutamate + ATP = L-glutamyl-tRNA(Glu) + AMP + diphosphate. Functionally, catalyzes the attachment of glutamate to tRNA(Glu) in a two-step reaction: glutamate is first activated by ATP to form Glu-AMP and then transferred to the acceptor end of tRNA(Glu). The chain is Glutamate--tRNA ligase from Shewanella denitrificans (strain OS217 / ATCC BAA-1090 / DSM 15013).